We begin with the raw amino-acid sequence, 367 residues long: Phospho-N-acetylmuramoyl-pentapeptide-transferase (367 aa).

10 helical membrane passes run 16–36 (LLLA…WVHF), 62–82 (TMGG…FNLV), 87–107 (MLLP…DDWL), 125–145 (FWIM…PQPY), 158–178 (VGEV…IVFI), 190–210 (SLAG…TFLA), 214–234 (LTNL…FLWY), 240–260 (QVFM…VVAL), 264–284 (QWIL…STLI), and 326–346 (FVLI…IFGS).

It belongs to the glycosyltransferase 4 family. MraY subfamily. Mg(2+) is required as a cofactor.

The protein resides in the cell membrane. It carries out the reaction UDP-N-acetyl-alpha-D-muramoyl-L-alanyl-gamma-D-glutamyl-meso-2,6-diaminopimeloyl-D-alanyl-D-alanine + di-trans,octa-cis-undecaprenyl phosphate = di-trans,octa-cis-undecaprenyl diphospho-N-acetyl-alpha-D-muramoyl-L-alanyl-D-glutamyl-meso-2,6-diaminopimeloyl-D-alanyl-D-alanine + UMP. It functions in the pathway cell wall biogenesis; peptidoglycan biosynthesis. Functionally, catalyzes the initial step of the lipid cycle reactions in the biosynthesis of the cell wall peptidoglycan: transfers peptidoglycan precursor phospho-MurNAc-pentapeptide from UDP-MurNAc-pentapeptide onto the lipid carrier undecaprenyl phosphate, yielding undecaprenyl-pyrophosphoryl-MurNAc-pentapeptide, known as lipid I. This is Phospho-N-acetylmuramoyl-pentapeptide-transferase from Chloroflexus aggregans (strain MD-66 / DSM 9485).